A 585-amino-acid polypeptide reads, in one-letter code: MTITYTSQVANARLGSFSRLLLCWRGSIYKLLYGEFFIFLLCYYIIRFIYRLALTEEQQLMFEKLTLYCDSYIQLIPISFVLGFYVTLVVTRWWNQYENLPWPDRLMSLVSGFVEGKDEQGRLLRRTLIRYANLGNVLILRSVSTAVYKRFPSAQHLVQAGFMTPAEHKQLEKLSLPHNMFWVPWVWFANLSMKAWLGGRIRDPILLQSLLNEMNTLRTQCGHLYAYDWISIPLVYTQVVTVAVYSFFLTCLVGRQFLNPAKAYPGHELDLVVPVFTFLQFFFYVGWLKVAEQLINPFGEDDDDFETNWIVDRNLQVSLLAVDEMHQDLPRMEPDMYWNEPEPHPPYTAASAQFRRASFMGSTFNISLNKEEMEFQPNQEDKEDAHTGIIGRFLGLQSHDHHPPGANSRTKLLWPKRESLLHEGLPKNHKAVKQNVRGLEDNKAWKLKAVDAFKSAPLYQRPGYYSAPQTPLSPTPMFFPPEPSVLSKLHSVTGIDTKDKSLKTVSSGAKNSSELLSGSDGALMEHPEVSHVRRKTVEFNLTDMPEIPENHLKEPLELSTTNIHATLKDHVDPYWALENRDEAHS.

At 1 to 31 (MTITYTSQVANARLGSFSRLLLCWRGSIYKL) the chain is on the cytoplasmic side. A10 contacts Ca(2+). Residues 32-51 (LYGEFFIFLLCYYIIRFIYR) traverse the membrane as a helical segment. At 52-60 (LALTEEQQL) the chain is on the extracellular side. Residues 61-82 (MFEKLTLYCDSYIQLIPISFVL) form a helical membrane-spanning segment. Residues 83-237 (GFYVTLVVTR…DWISIPLVYT (155 aa)) are Cytoplasmic-facing. Residues 238–255 (QVVTVAVYSFFLTCLVGR) traverse the membrane as a helical segment. Over 256–274 (QFLNPAKAYPGHELDLVVP) the chain is Extracellular. A helical transmembrane segment spans residues 275-288 (VFTFLQFFFYVGWL). Residues 289-585 (KVAEQLINPF…ALENRDEAHS (297 aa)) lie on the Cytoplasmic side of the membrane. Ca(2+)-binding residues include Q293, N296, D301, and D304. Residues 346-379 (PYTAASAQFRRASFMGSTFNISLNKEEMEFQPNQ) are auto-inhibitory segment.

It belongs to the anion channel-forming bestrophin (TC 1.A.46) family. Calcium-sensitive chloride channel subfamily. As to quaternary structure, interacts with YWHAG; this interaction promotes the ligand-gated L-glutamate channel activity leading to the positive regulation of NMDA glutamate receptor activity through the L-glutamate secretion.

Its subcellular location is the cell membrane. The protein resides in the basolateral cell membrane. It carries out the reaction chloride(in) = chloride(out). The enzyme catalyses hydrogencarbonate(in) = hydrogencarbonate(out). It catalyses the reaction 4-aminobutanoate(in) = 4-aminobutanoate(out). The catalysed reaction is L-glutamate(out) = L-glutamate(in). Ligand-gated anion channel that allows the movement of anions across cell membranes when activated by calcium (Ca2+). Allows the movement of chloride and hydrogencarbonate. Found in a partially open conformation leading to significantly smaller chloride movement. Upon F2R/PAR-1 activation, the sequestered calcium is released into the cytosol of astrocytes, leading to the (Ca2+)-dependent release of L-glutamate into the synaptic cleft that targets the neuronal postsynaptic GRIN2A/NMDAR receptor resulting in the synaptic plasticity regulation. Upon activation of the norepinephrine-alpha-1 adrenergic receptor signaling pathway, transports as well D-serine than L-glutamate in a (Ca2+)-dependent manner, leading to activation of adjacent NMDAR receptors and therefore regulates the heterosynaptic long-term depression and metaplasticity during initial memory acquisition. Releases the 4-aminobutanoate neurotransmitter in a (Ca2+)-dependent manner, and participates in its tonic release from cerebellar glial cells. In Macaca fascicularis (Crab-eating macaque), this protein is Bestrophin-1 (BEST1).